We begin with the raw amino-acid sequence, 640 residues long: Phosphomethylpyrimidine synthase (640 aa).

Substrate-binding positions include N235, M264, Y293, H329, 349-351, 390-393, and E429; these read SRG and DGLR. H433 contributes to the Zn(2+) binding site. Y456 serves as a coordination point for substrate. H497 provides a ligand contact to Zn(2+). Positions 577, 580, and 585 each coordinate [4Fe-4S] cluster.

Belongs to the ThiC family. As to quaternary structure, homodimer. [4Fe-4S] cluster is required as a cofactor.

The catalysed reaction is 5-amino-1-(5-phospho-beta-D-ribosyl)imidazole + S-adenosyl-L-methionine = 4-amino-2-methyl-5-(phosphooxymethyl)pyrimidine + CO + 5'-deoxyadenosine + formate + L-methionine + 3 H(+). It participates in cofactor biosynthesis; thiamine diphosphate biosynthesis. Functionally, catalyzes the synthesis of the hydroxymethylpyrimidine phosphate (HMP-P) moiety of thiamine from aminoimidazole ribotide (AIR) in a radical S-adenosyl-L-methionine (SAM)-dependent reaction. The polypeptide is Phosphomethylpyrimidine synthase (Photobacterium profundum (strain SS9)).